The sequence spans 307 residues: Acetaldehyde dehydrogenase (307 aa).

12–15 (SGNI) serves as a coordination point for NAD(+). C130 functions as the Acyl-thioester intermediate in the catalytic mechanism. Residues 161–169 (SVGPGTRQN) and N272 each bind NAD(+).

This sequence belongs to the acetaldehyde dehydrogenase family.

The enzyme catalyses acetaldehyde + NAD(+) + CoA = acetyl-CoA + NADH + H(+). This is Acetaldehyde dehydrogenase from Shewanella pealeana (strain ATCC 700345 / ANG-SQ1).